An 883-amino-acid polypeptide reads, in one-letter code: Aldehyde-alcohol dehydrogenase (883 aa).

Residues 13-456 (KLVAEKHVDE…DNVSAINLLN (444 aa)) form an aldehyde dehydrogenase region. NAD(+)-binding positions include 121–126 (ITPTTN), Gly206, and Gly224. Cys257 (nucleophile) is an active-site residue. Residues Glu355, Leu435, and 438–443 (GSYGRN) each bind NAD(+). Positions 457-464 (IKKVGRRR) are linker. NAD(+) contacts are provided by residues Asp500, Asp534, 561 to 565 (GSPMD), 612 to 613 (TT), Val625, Lys634, and Leu653. Residues Asp668, His672, His736, and His750 each contribute to the Fe cation site.

This sequence in the N-terminal section; belongs to the aldehyde dehydrogenase family. The protein in the C-terminal section; belongs to the iron-containing alcohol dehydrogenase family. Fe(2+) is required as a cofactor.

It carries out the reaction ethanol + NAD(+) = acetaldehyde + NADH + H(+). It catalyses the reaction an aldehyde + NAD(+) + H2O = a carboxylate + NADH + 2 H(+). In terms of biological role, has alcohol dehydrogenase activity. Has aldehyde dehydrogenase activity. May play a role in enhancing virulence in mice. May be considered a potential virulence factor. The protein is Aldehyde-alcohol dehydrogenase of Streptococcus pneumoniae serotype 4 (strain ATCC BAA-334 / TIGR4).